We begin with the raw amino-acid sequence, 199 residues long: Charged multivesicular body protein 1b (199 aa).

Coiled-coil stretches lie at residues 10–30 and 178–199; these read NLKFAAKELQRNSKKCDKEEK and TSVASAEQDELSQRLAKLRDQV. A disordered region spans residues 167-199; it reads ELPQGQTGSVGTSVASAEQDELSQRLAKLRDQV. Over residues 170 to 182 the composition is skewed to polar residues; that stretch reads QGQTGSVGTSVAS. Residues 186-196 carry the MIT-interacting motif motif; it reads DELSQRLAKLR.

It belongs to the SNF7 family. Probable peripherally associated component of the endosomal sorting required for transport complex III (ESCRT-III).

The protein resides in the cytoplasm. The protein localises to the cytosol. It localises to the endosome. Its subcellular location is the late endosome membrane. Its function is as follows. Probable peripherally associated component of the endosomal sorting required for transport complex III (ESCRT-III) which is involved in multivesicular bodies (MVBs) formation and sorting of endosomal cargo proteins into MVBs. MVBs contain intraluminal vesicles (ILVs) that are generated by invagination and scission from the limiting membrane of the endosome and mostly are delivered to lysosomes enabling degradation of membrane proteins, such as stimulated growth factor receptors, lysosomal enzymes and lipids. This Danio rerio (Zebrafish) protein is Charged multivesicular body protein 1b (chmp1b).